The primary structure comprises 637 residues: Probable polypeptide N-acetylgalactosaminyltransferase 8 (637 aa).

At 1–6 the chain is on the cytoplasmic side; that stretch reads MMFWRK. The chain crosses the membrane as a helical; Signal-anchor for type II membrane protein span at residues 7-29; it reads LPKALFIGLTLAIAVNLLLVFSS. The Lumenal segment spans residues 30–637; the sequence is KGTLQNLFTG…VRDWGQTNSQ (608 aa). 3 N-linked (GlcNAc...) asparagine glycosylation sites follow: N85, N107, and N160. Cystine bridges form between C171–C404, C395–C474, C509–C525, C556–C571, and C599–C617. The tract at residues 180–294 is catalytic subdomain A; sequence LPSLSVILIF…VGWAEPILAR (115 aa). Residues D221 and R255 each coordinate substrate. D278, H280, and H409 together coordinate Mn(2+). The tract at residues 351–412 is catalytic subdomain B; that stretch reads PVKSPSIMGI…PCSRIAHLER (62 aa). The substrate site is built by R412 and Y417. Residues 496 to 634 form the Ricin B-type lectin domain; it reads GYGRMKNLLD…QHTVRDWGQT (139 aa).

This sequence belongs to the glycosyltransferase 2 family. GalNAc-T subfamily. It depends on Mn(2+) as a cofactor. In terms of tissue distribution, widely expressed. Expressed in heart, skeletal muscle, kidney, liver, small intestine and placenta. Weakly expressed in colon, thymus, spleen, lung and leukocyte.

It is found in the golgi apparatus membrane. The enzyme catalyses L-seryl-[protein] + UDP-N-acetyl-alpha-D-galactosamine = a 3-O-[N-acetyl-alpha-D-galactosaminyl]-L-seryl-[protein] + UDP + H(+). It carries out the reaction L-threonyl-[protein] + UDP-N-acetyl-alpha-D-galactosamine = a 3-O-[N-acetyl-alpha-D-galactosaminyl]-L-threonyl-[protein] + UDP + H(+). The protein operates within protein modification; protein glycosylation. In terms of biological role, probably catalyzes the initial reaction in O-linked oligosaccharide biosynthesis, the transfer of an N-acetyl-D-galactosamine residue to a serine or threonine residue on the protein receptor. This chain is Probable polypeptide N-acetylgalactosaminyltransferase 8 (GALNT8), found in Homo sapiens (Human).